Consider the following 332-residue polypeptide: o-succinylbenzoate synthase (332 aa).

Lys-135 (proton donor) is an active-site residue. 3 residues coordinate Mg(2+): Asp-163, Glu-192, and Asp-215. The Proton acceptor role is filled by Lys-241.

This sequence belongs to the mandelate racemase/muconate lactonizing enzyme family. MenC type 1 subfamily. It depends on a divalent metal cation as a cofactor.

The enzyme catalyses (1R,6R)-6-hydroxy-2-succinyl-cyclohexa-2,4-diene-1-carboxylate = 2-succinylbenzoate + H2O. It participates in quinol/quinone metabolism; 1,4-dihydroxy-2-naphthoate biosynthesis; 1,4-dihydroxy-2-naphthoate from chorismate: step 4/7. The protein operates within quinol/quinone metabolism; menaquinone biosynthesis. Its function is as follows. Converts 2-succinyl-6-hydroxy-2,4-cyclohexadiene-1-carboxylate (SHCHC) to 2-succinylbenzoate (OSB). The chain is o-succinylbenzoate synthase from Vibrio cholerae serotype O1 (strain ATCC 39315 / El Tor Inaba N16961).